We begin with the raw amino-acid sequence, 232 residues long: Probable anion ABC transporter permease protein HVO_1887 (232 aa).

The region spanning 16 to 217 (TAVSLYVSTA…ALVLGVNALG (202 aa)) is the ABC transmembrane type-1 domain. Transmembrane regions (helical) follow at residues 23–43 (STAAVALSAALGLPISLAVGF), 55–75 (VISTGMGFPSVVVGLVVLLVL), 93–113 (MILSQTILALPVLVSVSLSAV), 146–166 (IVTALLAAYGRAISEVGSVLI), and 198–218 (TGIALGAILLALVLGVNALGA).

Belongs to the binding-protein-dependent transport system permease family. The complex is composed of two ATP-binding proteins (HVO_1886), two transmembrane proteins (HVO_1887) and a solute-binding protein (HVO_1888).

It localises to the cell membrane. Its function is as follows. Part of an ABC transporter complex involved in anions import. Responsible for the translocation of the substrate across the membrane. This is Probable anion ABC transporter permease protein HVO_1887 from Haloferax volcanii (strain ATCC 29605 / DSM 3757 / JCM 8879 / NBRC 14742 / NCIMB 2012 / VKM B-1768 / DS2) (Halobacterium volcanii).